A 34-amino-acid polypeptide reads, in one-letter code: Subtilosin-A (34 aa).

The cyclopeptide (Asn-Gly) cross-link spans 1–34; it reads NKGCATCSIGIACLVDGPIPDFECAGATGLGLWG. The segment at residues 7–28 is a cross-link (2-cysteinyl-D-allo-threonine (Cys-Thr)); the sequence is CSIGIACLVDGPIPDFECAGAT. The 2-cysteinyl-L-phenylalanine (Cys-Phe) cross-link spans 13-22; it reads CLVDGPIPDF.

It belongs to the bacteriocin class V family. Alpha-amino of Asn-1 is covalently linked with the carboxyl of Gly-34 to form a cyclopeptide. Thioether cross-links are formed between cysteines and the alpha-carbons of other amino acids, Cys-7 to Thr-28 and Cys-13 to Phe-22. In forming this cross-link, Thr-28 is converted to D-amino acid.

It localises to the secreted. Functionally, has bactericidal activity against some Gram-positive bacteria. This Cytobacillus firmus (Bacillus firmus) protein is Subtilosin-A.